Consider the following 119-residue polypeptide: Holo-[acyl-carrier-protein] synthase (119 aa).

Mg(2+)-binding residues include D8 and E58.

It belongs to the P-Pant transferase superfamily. AcpS family. Mg(2+) is required as a cofactor.

It is found in the cytoplasm. It carries out the reaction apo-[ACP] + CoA = holo-[ACP] + adenosine 3',5'-bisphosphate + H(+). Transfers the 4'-phosphopantetheine moiety from coenzyme A to a Ser of acyl-carrier-protein. The sequence is that of Holo-[acyl-carrier-protein] synthase from Halalkalibacterium halodurans (strain ATCC BAA-125 / DSM 18197 / FERM 7344 / JCM 9153 / C-125) (Bacillus halodurans).